The chain runs to 542 residues: Probable E3 ubiquitin-protein ligase ARI11 (542 aa).

The disordered stretch occupies residues 1–25; it reads MSSSDRDIIDIESGEEDLYSDGGND. A compositionally biased stretch (acidic residues) spans 10–19; sequence DIESGEEDLY. Residues 135–342 are TRIAD supradomain; sequence VDIQCGICFE…SDHKACNAFK (208 aa). Cysteine 139, cysteine 142, cysteine 156, histidine 158, cysteine 161, cysteine 164, cysteine 184, cysteine 189, cysteine 228, cysteine 233, cysteine 251, cysteine 253, cysteine 258, cysteine 261, histidine 266, cysteine 271, cysteine 298, and cysteine 301 together coordinate Zn(2+). An RING-type 1 zinc finger spans residues 139 to 189; the sequence is CGICFESYTRKEIARVSCGHPYCKTCWTGYITTKIEDGPGCLRVKCPEPSC. The segment at 208-271 adopts an IBR-type zinc-finger fold; the sequence is DKYYRYFLRS…CEDAHSPVDC (64 aa). The segment at 298-328 adopts an RING-type 2; atypical zinc-finger fold; that stretch reads CPKCKRPIEKNTGCNHMSCSAPCRHYFCWAC. Cysteine 311 is an active-site residue. The Zn(2+) site is built by cysteine 316, cysteine 320, cysteine 325, cysteine 328, histidine 335, and cysteine 338.

This sequence belongs to the RBR family. Ariadne subfamily. It depends on Zn(2+) as a cofactor.

The catalysed reaction is [E2 ubiquitin-conjugating enzyme]-S-ubiquitinyl-L-cysteine + [acceptor protein]-L-lysine = [E2 ubiquitin-conjugating enzyme]-L-cysteine + [acceptor protein]-N(6)-ubiquitinyl-L-lysine.. It participates in protein modification; protein ubiquitination. Functionally, might act as an E3 ubiquitin-protein ligase, or as part of E3 complex, which accepts ubiquitin from specific E2 ubiquitin-conjugating enzymes and then transfers it to substrates. This Arabidopsis thaliana (Mouse-ear cress) protein is Probable E3 ubiquitin-protein ligase ARI11 (ARI11).